Here is a 430-residue protein sequence, read N- to C-terminus: Serine hydroxymethyltransferase (430 aa).

Gly-120–Ile-122 lines the (6S)-5,6,7,8-tetrahydrofolate pocket. Lys-226 is modified (N6-(pyridoxal phosphate)lysine).

It belongs to the SHMT family. Homodimer. The cofactor is pyridoxal 5'-phosphate.

Its subcellular location is the cytoplasm. Its pathway is amino-acid biosynthesis; glycine biosynthesis; glycine from L-serine: step 1/1. Its function is as follows. Catalyzes the reversible interconversion of serine and glycine with a modified folate serving as the one-carbon carrier. Also exhibits a pteridine-independent aldolase activity toward beta-hydroxyamino acids, producing glycine and aldehydes, via a retro-aldol mechanism. The sequence is that of Serine hydroxymethyltransferase from Pyrobaculum neutrophilum (strain DSM 2338 / JCM 9278 / NBRC 100436 / V24Sta) (Thermoproteus neutrophilus).